Consider the following 333-residue polypeptide: Uroporphyrinogen decarboxylase (333 aa).

Substrate is bound by residues 21–25, D70, Y139, S194, and H309; that span reads RQVGR.

Belongs to the uroporphyrinogen decarboxylase family. In terms of assembly, homodimer.

Its subcellular location is the cytoplasm. It catalyses the reaction uroporphyrinogen III + 4 H(+) = coproporphyrinogen III + 4 CO2. Its pathway is porphyrin-containing compound metabolism; protoporphyrin-IX biosynthesis; coproporphyrinogen-III from 5-aminolevulinate: step 4/4. In terms of biological role, catalyzes the decarboxylation of four acetate groups of uroporphyrinogen-III to yield coproporphyrinogen-III. This is Uroporphyrinogen decarboxylase from Chlamydia caviae (strain ATCC VR-813 / DSM 19441 / 03DC25 / GPIC) (Chlamydophila caviae).